Reading from the N-terminus, the 331-residue chain is Phosphoribosylformylglycinamidine cyclo-ligase (331 aa).

This sequence belongs to the AIR synthase family.

It is found in the cytoplasm. The enzyme catalyses 2-formamido-N(1)-(5-O-phospho-beta-D-ribosyl)acetamidine + ATP = 5-amino-1-(5-phospho-beta-D-ribosyl)imidazole + ADP + phosphate + H(+). It participates in purine metabolism; IMP biosynthesis via de novo pathway; 5-amino-1-(5-phospho-D-ribosyl)imidazole from N(2)-formyl-N(1)-(5-phospho-D-ribosyl)glycinamide: step 2/2. This Clostridium botulinum (strain Loch Maree / Type A3) protein is Phosphoribosylformylglycinamidine cyclo-ligase.